Here is a 176-residue protein sequence, read N- to C-terminus: ATP-dependent protease subunit HslV (176 aa).

The active site involves threonine 2. Na(+)-binding residues include glycine 157, cysteine 160, and threonine 163.

Belongs to the peptidase T1B family. HslV subfamily. As to quaternary structure, a double ring-shaped homohexamer of HslV is capped on each side by a ring-shaped HslU homohexamer. The assembly of the HslU/HslV complex is dependent on binding of ATP.

It localises to the cytoplasm. It carries out the reaction ATP-dependent cleavage of peptide bonds with broad specificity.. Its activity is regulated as follows. Allosterically activated by HslU binding. In terms of biological role, protease subunit of a proteasome-like degradation complex believed to be a general protein degrading machinery. The sequence is that of ATP-dependent protease subunit HslV from Pseudomonas fluorescens (strain ATCC BAA-477 / NRRL B-23932 / Pf-5).